A 452-amino-acid polypeptide reads, in one-letter code: Na(+)/H(+) antiporter NhaA (452 aa).

The next 11 helical transmembrane spans lie at 23-43 (MMLFLASVLAVIMANSSLSTI), 71-91 (LLQFVNDVLMVIFFLAVGLEI), 108-128 (LPIVGAIGGMIVPVLFFLLVV), 136-156 (GAAIPMSTDIAFALAALAVLG), 165-185 (VFLTALAVADDIGGIIVIALF), 189-209 (HINIGMLAIAFGILFIMYLMG), 216-236 (LGLYFVCTFFVWLFFLQSGIH), 316-336 (IVGYFVLPLFAFANAGITLGG), 349-369 (VFLGLFVGKPLGIYFFTYGFV), 385-405 (LMAVSLFGGIGFTVSLFIATL), and 418-438 (EAKLGIFVASIFAAVVGIVTL).

Belongs to the NhaA Na(+)/H(+) (TC 2.A.33) antiporter family.

Its subcellular location is the cell inner membrane. It carries out the reaction Na(+)(in) + 2 H(+)(out) = Na(+)(out) + 2 H(+)(in). Functionally, na(+)/H(+) antiporter that extrudes sodium in exchange for external protons. This Porphyromonas gingivalis (strain ATCC 33277 / DSM 20709 / CIP 103683 / JCM 12257 / NCTC 11834 / 2561) protein is Na(+)/H(+) antiporter NhaA.